The chain runs to 234 residues: Thiamine-phosphate synthase (234 aa).

4-amino-2-methyl-5-(diphosphooxymethyl)pyrimidine contacts are provided by residues 52 to 56 and Asn-84; that span reads QYRSK. 2 residues coordinate Mg(2+): Asp-85 and Asp-104. Ser-123 contacts 4-amino-2-methyl-5-(diphosphooxymethyl)pyrimidine. 2-[(2R,5Z)-2-carboxy-4-methylthiazol-5(2H)-ylidene]ethyl phosphate is bound at residue 150–152; that stretch reads SVT. Lys-153 contributes to the 4-amino-2-methyl-5-(diphosphooxymethyl)pyrimidine binding site. Residue Gly-180 coordinates 2-[(2R,5Z)-2-carboxy-4-methylthiazol-5(2H)-ylidene]ethyl phosphate.

The protein belongs to the thiamine-phosphate synthase family. It depends on Mg(2+) as a cofactor.

It catalyses the reaction 2-[(2R,5Z)-2-carboxy-4-methylthiazol-5(2H)-ylidene]ethyl phosphate + 4-amino-2-methyl-5-(diphosphooxymethyl)pyrimidine + 2 H(+) = thiamine phosphate + CO2 + diphosphate. It carries out the reaction 2-(2-carboxy-4-methylthiazol-5-yl)ethyl phosphate + 4-amino-2-methyl-5-(diphosphooxymethyl)pyrimidine + 2 H(+) = thiamine phosphate + CO2 + diphosphate. The catalysed reaction is 4-methyl-5-(2-phosphooxyethyl)-thiazole + 4-amino-2-methyl-5-(diphosphooxymethyl)pyrimidine + H(+) = thiamine phosphate + diphosphate. The protein operates within cofactor biosynthesis; thiamine diphosphate biosynthesis; thiamine phosphate from 4-amino-2-methyl-5-diphosphomethylpyrimidine and 4-methyl-5-(2-phosphoethyl)-thiazole: step 1/1. In terms of biological role, condenses 4-methyl-5-(beta-hydroxyethyl)thiazole monophosphate (THZ-P) and 2-methyl-4-amino-5-hydroxymethyl pyrimidine pyrophosphate (HMP-PP) to form thiamine monophosphate (TMP). This chain is Thiamine-phosphate synthase, found in Nitrosospira multiformis (strain ATCC 25196 / NCIMB 11849 / C 71).